The primary structure comprises 222 residues: Peptide methionine sulfoxide reductase MsrA (222 aa).

Residue Cys-60 is part of the active site.

Belongs to the MsrA Met sulfoxide reductase family.

The catalysed reaction is L-methionyl-[protein] + [thioredoxin]-disulfide + H2O = L-methionyl-(S)-S-oxide-[protein] + [thioredoxin]-dithiol. The enzyme catalyses [thioredoxin]-disulfide + L-methionine + H2O = L-methionine (S)-S-oxide + [thioredoxin]-dithiol. Functionally, has an important function as a repair enzyme for proteins that have been inactivated by oxidation. Catalyzes the reversible oxidation-reduction of methionine sulfoxide in proteins to methionine. The protein is Peptide methionine sulfoxide reductase MsrA of Pseudomonas putida (strain ATCC 47054 / DSM 6125 / CFBP 8728 / NCIMB 11950 / KT2440).